A 273-amino-acid chain; its full sequence is Nitrogenase iron protein (273 aa).

8–15 (GKGGIGKS) lines the ATP pocket. Cys-95 is a [4Fe-4S] cluster binding site. An ADP-ribosylarginine; by dinitrogenase reductase ADP-ribosyltransferase modification is found at Arg-98. Position 130 (Cys-130) interacts with [4Fe-4S] cluster.

It belongs to the NifH/BchL/ChlL family. As to quaternary structure, homodimer. [4Fe-4S] cluster serves as cofactor. In terms of processing, the reversible ADP-ribosylation of Arg-98 inactivates the nitrogenase reductase and regulates nitrogenase activity.

The enzyme catalyses N2 + 8 reduced [2Fe-2S]-[ferredoxin] + 16 ATP + 16 H2O = H2 + 8 oxidized [2Fe-2S]-[ferredoxin] + 2 NH4(+) + 16 ADP + 16 phosphate + 6 H(+). Functionally, the key enzymatic reactions in nitrogen fixation are catalyzed by the nitrogenase complex, which has 2 components: the iron protein and the molybdenum-iron protein. The protein is Nitrogenase iron protein of Methanosarcina mazei (strain ATCC BAA-159 / DSM 3647 / Goe1 / Go1 / JCM 11833 / OCM 88) (Methanosarcina frisia).